A 310-amino-acid polypeptide reads, in one-letter code: Porphobilinogen deaminase (310 aa).

The residue at position 241 (C241) is an S-(dipyrrolylmethanemethyl)cysteine.

The protein belongs to the HMBS family. As to quaternary structure, monomer. Dipyrromethane is required as a cofactor.

The enzyme catalyses 4 porphobilinogen + H2O = hydroxymethylbilane + 4 NH4(+). It functions in the pathway porphyrin-containing compound metabolism; protoporphyrin-IX biosynthesis; coproporphyrinogen-III from 5-aminolevulinate: step 2/4. Tetrapolymerization of the monopyrrole PBG into the hydroxymethylbilane pre-uroporphyrinogen in several discrete steps. This Lysinibacillus sphaericus (strain C3-41) protein is Porphobilinogen deaminase.